The sequence spans 1384 residues: DNA-directed RNA polymerase subunit beta (1384 aa).

The protein belongs to the RNA polymerase beta chain family. As to quaternary structure, the RNAP catalytic core consists of 2 alpha, 1 beta, 1 beta' and 1 omega subunit. When a sigma factor is associated with the core the holoenzyme is formed, which can initiate transcription.

The catalysed reaction is RNA(n) + a ribonucleoside 5'-triphosphate = RNA(n+1) + diphosphate. In terms of biological role, DNA-dependent RNA polymerase catalyzes the transcription of DNA into RNA using the four ribonucleoside triphosphates as substrates. The chain is DNA-directed RNA polymerase subunit beta from Xylella fastidiosa (strain M23).